A 368-amino-acid polypeptide reads, in one-letter code: Phospho-N-acetylmuramoyl-pentapeptide-transferase (368 aa).

Transmembrane regions (helical) follow at residues 30–50 (AAAI…IKYL), 72–92 (LPTM…LLWS), 95–115 (IDPH…IGFI), 139–159 (VTLG…SVLL), 169–189 (YLTI…ITAV), 208–228 (AIVV…VYAV), 238–258 (GGEI…FLWF), 264–286 (EIIM…ALLI), and 345–365 (KIVI…LMTL).

Belongs to the glycosyltransferase 4 family. MraY subfamily. Requires Mg(2+) as cofactor.

It localises to the cell inner membrane. The catalysed reaction is UDP-N-acetyl-alpha-D-muramoyl-L-alanyl-gamma-D-glutamyl-meso-2,6-diaminopimeloyl-D-alanyl-D-alanine + di-trans,octa-cis-undecaprenyl phosphate = di-trans,octa-cis-undecaprenyl diphospho-N-acetyl-alpha-D-muramoyl-L-alanyl-D-glutamyl-meso-2,6-diaminopimeloyl-D-alanyl-D-alanine + UMP. It functions in the pathway cell wall biogenesis; peptidoglycan biosynthesis. Functionally, catalyzes the initial step of the lipid cycle reactions in the biosynthesis of the cell wall peptidoglycan: transfers peptidoglycan precursor phospho-MurNAc-pentapeptide from UDP-MurNAc-pentapeptide onto the lipid carrier undecaprenyl phosphate, yielding undecaprenyl-pyrophosphoryl-MurNAc-pentapeptide, known as lipid I. In Pelodictyon phaeoclathratiforme (strain DSM 5477 / BU-1), this protein is Phospho-N-acetylmuramoyl-pentapeptide-transferase.